The chain runs to 706 residues: G2/M phase-specific E3 ubiquitin-protein ligase (706 aa).

Residues 11-51 form a C2HC pre-PHD-type zinc finger; it reads NLACVFCRKHDDCPNKYGEKKTKEKWNLTVHYYCLLMSSGI. The PHD-type 1 zinc finger occupies 79-128; that stretch reads LKCCVCKKNGASIGCVAPRCKRSYHFPCGLQRECIFQFTGNFASFCWDHR. The segment at 143–193 adopts a PHD-type 2; degenerate zinc-finger fold; the sequence is PCTICLEFIEPIPSYNILRSPCCKNAWFHRDCLQVQAINAGVFFFRCTICN. The segment at 237–286 adopts a PHD-type 3 zinc-finger fold; the sequence is RCRCKEGRDYNAPDSKWEIKRCQCCGSSGTHLACSSLRSWEQNWECLECR. The region spanning 371–698 is the HECT domain; that stretch reads IWNSALDAFR…IRNTLRLEKE (328 aa).

Predominantly expressed in brain, liver, kidney, testes and ovary.

It is found in the nucleus. It localises to the nucleolus. The protein localises to the cytoplasm. It catalyses the reaction S-ubiquitinyl-[E2 ubiquitin-conjugating enzyme]-L-cysteine + [acceptor protein]-L-lysine = [E2 ubiquitin-conjugating enzyme]-L-cysteine + N(6)-ubiquitinyl-[acceptor protein]-L-lysine.. It participates in protein modification; protein ubiquitination. Its function is as follows. E3 ubiquitin-protein ligase which accepts ubiquitin from an E2 ubiquitin-conjugating enzyme in the form of a thioester and then directly transfers the ubiquitin to targeted substrates. Essential in early embryonic development to prevent apoptotic death. The chain is G2/M phase-specific E3 ubiquitin-protein ligase (G2E3) from Homo sapiens (Human).